Consider the following 650-residue polypeptide: DNA gyrase subunit B (650 aa).

Residues N429–P543 enclose the Toprim domain. Mg(2+) contacts are provided by E435, D508, and D510.

It belongs to the type II topoisomerase GyrB family. As to quaternary structure, heterotetramer, composed of two GyrA and two GyrB chains. In the heterotetramer, GyrA contains the active site tyrosine that forms a transient covalent intermediate with DNA, while GyrB binds cofactors and catalyzes ATP hydrolysis. Mg(2+) is required as a cofactor. It depends on Mn(2+) as a cofactor. Requires Ca(2+) as cofactor.

It is found in the cytoplasm. The enzyme catalyses ATP-dependent breakage, passage and rejoining of double-stranded DNA.. A type II topoisomerase that negatively supercoils closed circular double-stranded (ds) DNA in an ATP-dependent manner to modulate DNA topology and maintain chromosomes in an underwound state. Negative supercoiling favors strand separation, and DNA replication, transcription, recombination and repair, all of which involve strand separation. Also able to catalyze the interconversion of other topological isomers of dsDNA rings, including catenanes and knotted rings. Type II topoisomerases break and join 2 DNA strands simultaneously in an ATP-dependent manner. This is DNA gyrase subunit B from Streptococcus pyogenes serotype M18 (strain MGAS8232).